We begin with the raw amino-acid sequence, 1038 residues long: Pentatricopeptide repeat-containing protein At5g27270 (1038 aa).

The span at 23–38 shows a compositional bias: low complexity; the sequence is SRNSRISIKSSSSSSK. A disordered region spans residues 23 to 69; that stretch reads SRNSRISIKSSSSSSKVRPDPWSLSDGNPEKPKPRYERPKHPLSDDD. Basic and acidic residues predominate over residues 50–69; sequence NPEKPKPRYERPKHPLSDDD. PPR repeat units lie at residues 187-221, 222-256, 257-291, 292-326, 327-361, 362-396, 397-431, 432-466, 467-501, 502-535, 536-570, 601-631, 634-668, 669-699, 703-737, 738-772, 773-807, 808-842, 843-877, 878-912, 913-947, 948-982, and 983-1017; these read SVVVYTIVLRLYGQVGKIKMAEETFLEMLEVGCEP, DAVACGTMLCTYARWGRHSAMLTFYKAVQERRILL, STSVYNFMLSSLQKKSFHGKVIDLWLEMVEEGVPP, NEFTYTLVVSSYAKQGFKEEALKAFGEMKSLGFVP, EEVTYSSVISLSVKAGDWEKAIGLYEDMRSQGIVP, SNYTCATMLSLYYKTENYPKALSLFADMERNKIPA, DEVIRGLIIRIYGKLGLFHDAQSMFEETERLNLLA, DEKTYLAMSQVHLNSGNVVKALDVIEMMKTRDIPL, SRFAYIVMLQCYAKIQNVDCAEEAFRALSKTGLPD, ASSCNDMLNLYTRLNLGEKAKGFIKQIMVDQVHF, DIELYKTAMRVYCKEGMVAEAQDLIVKMGREARVK, DVMALGLMLNLRLKEGNLNETKAILNLMFKT, GSSAVNRVISSFVREGDVSKAEMIADIIIRLGLRM, EEETIATLIAVYGRQHKLKEAKRLYLAAGES, GKSVIRSMIDAYVRCGWLEDAYGLFMESAEKGCDP, GAVTISILVNALTNRGKHREAEHISRTCLEKNIEL, DTVGYNTLIKAMLEAGKLQCASEIYERMHTSGVPC, SIQTYNTMISVYGRGLQLDKAIEIFSNARRSGLYL, DEKIYTNMIMHYGKGGKMSEALSLFSEMQKKGIKP, GTPSYNMMVKICATSRLHHEVDELLQAMERNGRCT, DLSTYLTLIQVYAESSQFAEAEKTITLVKEKGIPL, SHSHFSSLLSALVKAGMMEEAERTYCKMSEAGISP, and DSACKRTILKGYMTCGDAEKGILFYEKMIRSSVED.

The protein belongs to the PPR family. P subfamily.

In Arabidopsis thaliana (Mouse-ear cress), this protein is Pentatricopeptide repeat-containing protein At5g27270 (EMB976).